A 491-amino-acid polypeptide reads, in one-letter code: Pre-glycoprotein polyprotein GP complex (491 aa).

A lipid anchor (N-myristoyl glycine; by host) is attached at glycine 2. Residues 2–17 (GQIVTFFQEVPHIIEE) lie on the Extracellular side of the membrane. Residues 18-33 (VMNIVLITLSLLAILK) form a helical membrane-spanning segment. The Cytoplasmic portion of the chain corresponds to 34–58 (GIYNVMTCGLIGLLTFLFLCGKSCS). Cysteine 57 provides a ligand contact to Zn(2+). Over 59 to 432 (TIYKDNYRLM…QGTTPLGLVD (374 aa)) the chain is Extracellular. Residues asparagine 78, asparagine 88, asparagine 98, asparagine 108, asparagine 118, and asparagine 166 are each glycosylated (N-linked (GlcNAc...) asparagine; by host). Disulfide bonds link cysteine 85–cysteine 231, cysteine 117–cysteine 154, cysteine 179–cysteine 212, cysteine 279–cysteine 292, cysteine 301–cysteine 310, and cysteine 364–cysteine 385. Asparagine 224 carries an N-linked (GlcNAc...) asparagine; by host glycan. N-linked (GlcNAc...) asparagine; by host glycosylation is found at asparagine 365, asparagine 373, asparagine 390, and asparagine 395. Residues 433-453 (LFVFSTSFYLISVFLHLIKIP) traverse the membrane as a helical segment. At 454–491 (THRHLVGKPCPKPHRLNHMGVCSCGLYKQPGLPTKWKR) the chain is on the cytoplasmic side. 6 residues coordinate Zn(2+): histidine 455, histidine 457, cysteine 463, histidine 467, cysteine 475, and cysteine 477.

Belongs to the arenaviridae GPC protein family. In terms of assembly, interacts with glycoprotein G2. Part of the GP complex (GP-C) together with glycoprotein G1 and glycoprotein G2. The GP-complex interacts with protein Z, which interacts with ribonucleocapsid; these interactions may induce virion budding. Homotrimer; disulfide-linked. In pre-fusion state, G1 homotrimers bind G2 homotrimers via ionic interactions. Part of the GP complex (GP-C) together with glycoprotein G2 and the stable signal peptide. The GP-complex interacts with protein Z, which interacts with ribonucleocapsid; these interactions may induce virion budding. As to quaternary structure, homotrimer. Interacts with the stable signal peptide. In pre-fusion state, G2 homotrimers bind G1 homotrimers via ionic interactions. Part of the GP complex (GP-C) together with glycoprotein G1 and the stable signal peptide. Acidification in the endosome triggers rearrangements, which ultimately leads to a 6 helix bundle formed by the two heptad repeat domains (HR1 and HR2) in post-fusion state. The GP-complex interacts with protein Z, which interacts with ribonucleocapsid; these interactions may induce virion budding. Specific enzymatic cleavages in vivo yield mature proteins. GP-C polyprotein is cleaved in the endoplasmic reticulum by the host protease MBTPS1. Only cleaved glycoprotein is incorporated into virions. Post-translationally, the SSP remains stably associated with the GP complex following cleavage by signal peptidase and plays crucial roles in the trafficking of GP through the secretory pathway. In terms of processing, myristoylation is necessary for GP2-mediated fusion activity.

It localises to the virion membrane. Its subcellular location is the host endoplasmic reticulum membrane. The protein localises to the host Golgi apparatus membrane. The protein resides in the host cell membrane. In terms of biological role, functions as a cleaved signal peptide that is retained as the third component of the GP complex (GP-C). Helps to stabilize the spike complex in its native conformation. The SSP is required for efficient glycoprotein expression, post-translational maturation cleavage of G1 and G2, glycoprotein transport to the cell surface plasma membrane, formation of infectious virus particles, and acid pH-dependent glycoprotein-mediated cell fusion. Its function is as follows. Forms the virion spikes together with glycoprotein G2. The glycoprotein spike trimers are connected to the underlying matrix. Mediates virus attachment to host receptor alpha-dystroglycan DAG1. This attachment induces virion internalization predominantly through clathrin- and caveolin-independent endocytosis. Functionally, forms the virion spikes together with glycoprotein G1. The glycoprotein spike trimers are connected to the underlying matrix. Class I viral fusion protein that directs fusion of viral and host endosomal membranes, leading to delivery of the nucleocapsid into the cytoplasm. Membrane fusion is mediated by irreversible conformational changes induced by acidification. In Mobala mammarenavirus (isolate Rat/Central African Republic/Acar 3080/1983) (MOBV), this protein is Pre-glycoprotein polyprotein GP complex.